Here is a 127-residue protein sequence, read N- to C-terminus: MAQSVPPGDIQTQPGTKIVFNAPYDDKHTYHIKVINSSARRIGYGIKTTNMKRLGVDPPCGVLDPKEAVLLAVSCDAFAFGQEDTNNDRITVEWTNTPDGAAKQFRREWFQGDGMARRKNLPIEYNP.

A2 is subject to N-acetylalanine. Residues 9 to 126 enclose the MSP domain; sequence DIQTQPGTKI…RRKNLPIEYN (118 aa).

In terms of tissue distribution, sperm.

It localises to the cell projection. It is found in the pseudopodium. The protein resides in the cytoplasm. The protein localises to the cytoskeleton. Central component in molecular interactions underlying sperm crawling. Forms an extensive filament system that extends from sperm villipoda, along the leading edge of the pseudopod. The protein is Major sperm protein 77/79 (msp-77) of Caenorhabditis elegans.